Reading from the N-terminus, the 415-residue chain is Histidine--tRNA ligase (415 aa).

Belongs to the class-II aminoacyl-tRNA synthetase family. As to quaternary structure, homodimer.

Its subcellular location is the cytoplasm. It carries out the reaction tRNA(His) + L-histidine + ATP = L-histidyl-tRNA(His) + AMP + diphosphate + H(+). This Gluconobacter oxydans (strain 621H) (Gluconobacter suboxydans) protein is Histidine--tRNA ligase.